Consider the following 544-residue polypeptide: MSNLDSTHHFDVVIVGSGGAGLSLALSLPSHYKIAILAKSSLTEASTFYAQGGVAAVLDKTDSIQQHIDDTMIAGAHLCELDAVKQTVEGGRPSVNFLLKHGVEFTLDEDDQLHLTREGGHSQRRIIHAADATGKAISTTLVQRAKEASNLTIFENFIAIDIITLHKLGHIQQDNRAVGLYVLDEQNEKVHTFLAPFIALACGGAMKAYLYTSNPDIATGDGIAMAYRAGCRVANMEFNQFHPTCLYHPQARSFLITEAMRGEGAYLRLPDGERFMLRFDERAELAPRDIVARAIDYEIKRLGIRHVWLDITHKSAEFIQQHFPTLYTRLLELGIDITKDMIPVVPAAHYTCGGVVVNAQSQTDIEGLYAIGETSYTGLHGANRMASNSLLECFVYGLSAAEDIQQKFEQDFNLPNIPEWDDSQVTDADEDVVILQNWDELRSTMWNYVGIVRTTKRLQRALHRIEMLKREITEYYQDYRVSKNLIELRNLVLVSEMIVRCAMQRKESRGLHYTLDYPELEQQLKKTVLTPPNFEVKQIPVNTL.

Residues 17–20, Lys-39, 46–53, and Asp-221 each bind FAD; these read SGGA and STFYAQGG. The active-site Proton donor/acceptor is the Arg-288. FAD-binding positions include Glu-373 and 389–390; that span reads SL.

Belongs to the FAD-dependent oxidoreductase 2 family. NadB subfamily. Requires FAD as cofactor.

The protein resides in the cytoplasm. The catalysed reaction is L-aspartate + O2 = iminosuccinate + H2O2. The protein operates within cofactor biosynthesis; NAD(+) biosynthesis; iminoaspartate from L-aspartate (oxidase route): step 1/1. Its function is as follows. Catalyzes the oxidation of L-aspartate to iminoaspartate, the first step in the de novo biosynthesis of NAD(+). The chain is L-aspartate oxidase from Acinetobacter baylyi (strain ATCC 33305 / BD413 / ADP1).